The primary structure comprises 185 residues: Elongation factor P (185 aa).

It belongs to the elongation factor P family.

It localises to the cytoplasm. The protein operates within protein biosynthesis; polypeptide chain elongation. Functionally, involved in peptide bond synthesis. Stimulates efficient translation and peptide-bond synthesis on native or reconstituted 70S ribosomes in vitro. Probably functions indirectly by altering the affinity of the ribosome for aminoacyl-tRNA, thus increasing their reactivity as acceptors for peptidyl transferase. This is Elongation factor P from Bacillus cereus (strain 03BB102).